The following is a 759-amino-acid chain: Short transient receptor potential channel 1 (759 aa).

The disordered stretch occupies residues 1–30; sequence MMAALYPSTDLSGASSSSLPSSPSSSSPNE. Residues 1–352 are Cytoplasmic-facing; sequence MMAALYPSTD…GRIIHTPFMK (352 aa). The span at 15-28 shows a compositional bias: low complexity; the sequence is SSSSLPSSPSSSSP. ANK repeat units lie at residues 46–75, 83–112, and 124–153; these read LNEKLFLLACDKGDYYMVKKILEENSSGDL, LGRNAVTITIENENLDILQLLLDYGCQKLM, and MDVAPVILAAHRNNYEILTMLLKQDVSLPK. A helical membrane pass occupies residues 353 to 373; it reads FIIHGASYFTFLLLLNLYSLV. Topologically, residues 374 to 381 are extracellular; sequence YNEDKKNT. Residues 382–402 traverse the membrane as a helical segment; that stretch reads MGPALERIDYLLILWIIGMIW. Residues 403–461 lie on the Cytoplasmic side of the membrane; it reads SDIKRLWYEGLEDFLEESRNQLSFVMNSLYLATFALKVVAHNKFHDFADRKDWDAFHPT. A helical membrane pass occupies residues 462-482; sequence LVAEGLFAFANVLSYLRLFFM. The Extracellular segment spans residues 483–505; it reads YTTSSILGPLQISMGQMLQDFGK. Residues 506-526 traverse the membrane as a helical segment; sequence FLGMFLLVLFSFTIGLTQLYD. Topologically, residues 527–552 are cytoplasmic; that stretch reads KGYTPKEQKDCVGIFCEQQSNDTFHS. A helical membrane pass occupies residues 553 to 573; that stretch reads FIGTCFALFWYIFSLAHVAIF. At 574 to 582 the chain is on the extracellular side; the sequence is VTRFSYGEE. Residues 583-603 traverse the membrane as a helical segment; that stretch reads LQSFVGAVIVGTYNVVVVIVL. Residues 604-759 are Cytoplasmic-facing; the sequence is TKLLVAMLHK…SKYAMFYPRN (156 aa).

It belongs to the transient receptor (TC 1.A.4) family. STrpC subfamily. TRPC1 sub-subfamily. In terms of assembly, homotetramer and heterotetramer with TRPC4 and/or TRPC5. Interacts with TRPC4 and TRPC5. Interacts with ITPR3. Interacts with MX1 and RNF24. Interacts with FKBP4. Interacts with TRPC4AP. Interacts with PLSCR1. Interacts with PKD2L2. Forms a heterotetramer with PKD2 with a 2:2 stoichiometry; has distinct channel properties separate from PKD2 or TRPC1 homomers alone. In terms of processing, activation of PRKCA induces phosphorylation of TRPC1 and subsequent Ca2+ entry into cells.

It is found in the cell membrane. It catalyses the reaction Ca(2+)(in) = Ca(2+)(out). Forms a receptor-activated non-selective calcium permeant cation channel. Probably is operated by a phosphatidylinositol second messenger system activated by receptor tyrosine kinases or G-protein coupled receptors. Also activated by intracellular calcium store depletion. This Oryctolagus cuniculus (Rabbit) protein is Short transient receptor potential channel 1 (TRPC1).